The following is a 397-amino-acid chain: Beta sliding clamp (397 aa).

It belongs to the beta sliding clamp family. In terms of assembly, forms a ring-shaped head-to-tail homodimer around DNA which binds and tethers DNA polymerases and other proteins to the DNA. The DNA replisome complex has a single clamp-loading complex (3 tau and 1 each of delta, delta', psi and chi subunits) which binds 3 Pol III cores (1 core on the leading strand and 2 on the lagging strand) each with a beta sliding clamp dimer. Additional proteins in the replisome are other copies of gamma, psi and chi, Ssb, DNA helicase and RNA primase.

Its subcellular location is the cytoplasm. Confers DNA tethering and processivity to DNA polymerases and other proteins. Acts as a clamp, forming a ring around DNA (a reaction catalyzed by the clamp-loading complex) which diffuses in an ATP-independent manner freely and bidirectionally along dsDNA. Initially characterized for its ability to contact the catalytic subunit of DNA polymerase III (Pol III), a complex, multichain enzyme responsible for most of the replicative synthesis in bacteria; Pol III exhibits 3'-5' exonuclease proofreading activity. The beta chain is required for initiation of replication as well as for processivity of DNA replication. This chain is Beta sliding clamp (dnaN), found in Mycolicibacterium smegmatis (strain ATCC 700084 / mc(2)155) (Mycobacterium smegmatis).